The sequence spans 229 residues: Uracil-DNA glycosylase (229 aa).

The Proton acceptor role is filled by aspartate 64.

This sequence belongs to the uracil-DNA glycosylase (UDG) superfamily. UNG family.

Its subcellular location is the cytoplasm. The enzyme catalyses Hydrolyzes single-stranded DNA or mismatched double-stranded DNA and polynucleotides, releasing free uracil.. Its function is as follows. Excises uracil residues from the DNA which can arise as a result of misincorporation of dUMP residues by DNA polymerase or due to deamination of cytosine. The polypeptide is Uracil-DNA glycosylase (Klebsiella pneumoniae (strain 342)).